The chain runs to 325 residues: Beta-ketoacyl-[acyl-carrier-protein] synthase III (325 aa).

Residues Cys116 and His252 contribute to the active site. The interval 253-257 (QANLR) is ACP-binding. Asn282 is an active-site residue.

The protein belongs to the thiolase-like superfamily. FabH family. In terms of assembly, homodimer.

The protein resides in the cytoplasm. The catalysed reaction is malonyl-[ACP] + acetyl-CoA + H(+) = 3-oxobutanoyl-[ACP] + CO2 + CoA. It participates in lipid metabolism; fatty acid biosynthesis. Catalyzes the condensation reaction of fatty acid synthesis by the addition to an acyl acceptor of two carbons from malonyl-ACP. Catalyzes the first condensation reaction which initiates fatty acid synthesis and may therefore play a role in governing the total rate of fatty acid production. Possesses both acetoacetyl-ACP synthase and acetyl transacylase activities. Its substrate specificity determines the biosynthesis of branched-chain and/or straight-chain of fatty acids. The protein is Beta-ketoacyl-[acyl-carrier-protein] synthase III of Xanthomonas oryzae pv. oryzae (strain MAFF 311018).